Here is a 212-residue protein sequence, read N- to C-terminus: Thymidylate kinase (212 aa).

Position 10–17 (10–17) interacts with ATP; it reads GLEGAGKS.

This sequence belongs to the thymidylate kinase family.

The enzyme catalyses dTMP + ATP = dTDP + ADP. Functionally, phosphorylation of dTMP to form dTDP in both de novo and salvage pathways of dTTP synthesis. In Vibrio cholerae serotype O1 (strain ATCC 39541 / Classical Ogawa 395 / O395), this protein is Thymidylate kinase.